Consider the following 435-residue polypeptide: Probable aminotransferase gliI (435 aa).

N6-(pyridoxal phosphate)lysine is present on Lys266.

Belongs to the class-I pyridoxal-phosphate-dependent aminotransferase family. Pyridoxal 5'-phosphate serves as cofactor.

It functions in the pathway mycotoxin biosynthesis. In terms of biological role, probable aminotransferase; part of the gene cluster that mediates the biosynthesis of gliotoxin, a member of the epipolythiodioxopiperazine (ETP) class of toxins characterized by a disulfide bridged cyclic dipeptide. The first step in gliotoxin biosynthesis is the condensation of serine and phenylalanine to form the cyclo-L-phenylalanyl-L-serine diketopiperazine (DKP) by the NRPS gliP. GliP is also able to produce the DKP cyclo-L-tryptophanyl-L-serine, suggesting that the substrate specificity of the first adenylation (A) domain in gliP is sufficiently relaxed to accommodate both L-Phe and L-Trp. The cytochrome P450 monooxygenase gliC has been shown to catalyze the subsequent hydroxylation of the alpha-carbon of L-Phe in cyclo-L-phenylalanyl-L-serine whereas the second cytochrome P450 enzyme, gliF, is presumably involved in the modification of the DKP side chain. The glutathione S-transferase (GST) gliG then forms a bis-glutathionylated biosynthetic intermediate which is responsible for the sulfurization of gliotoxin. This bis-glutathionylated intermediate is subsequently processed by the gamma-glutamyl cyclotransferase gliK to remove both gamma-glutamyl moieties. Subsequent processing via gliI yields a biosynthetic intermediate, which is N-methylated via the N-methyltransferase gliN, before the gliotoxin oxidoreductase gliT-mediated disulfide bridge closure. GliN-mediated amide methylation confers stability to ETP, damping the spontaneous formation of tri- and tetrasulfides. Intracellular dithiol gliotoxin oxidized by gliT is subsequently effluxed by gliA. Gliotoxin contributes to pathogenesis during invasive aspergillosis. In macrophages and neutrophils, gliotoxin showed inhibition of various different cell functions including cytokine production, antigen presentation, phagocytosis, and production of reactive oxygen species. The polypeptide is Probable aminotransferase gliI (Aspergillus fumigatus (strain ATCC MYA-4609 / CBS 101355 / FGSC A1100 / Af293) (Neosartorya fumigata)).